The sequence spans 176 residues: UPF0262 protein GbCGDNIH1_1393 (176 aa).

This sequence belongs to the UPF0262 family.

This is UPF0262 protein GbCGDNIH1_1393 from Granulibacter bethesdensis (strain ATCC BAA-1260 / CGDNIH1).